We begin with the raw amino-acid sequence, 380 residues long: Flap endonuclease 1 (380 aa).

The interval 1 to 105 (MGIKGLAQVL…GELAKRVARH (105 aa)) is N-domain. Asp34 is a binding site for Mg(2+). DNA is bound by residues Arg47 and Arg71. Mg(2+) is bound by residues Asp87, Glu159, Glu161, Asp180, and Asp182. The I-domain stretch occupies residues 123-254 (MVDRFAKRTV…ARAVELIRQY (132 aa)). Glu159 provides a ligand contact to DNA. 2 residues coordinate DNA: Gly232 and Asp234. Position 234 (Asp234) interacts with Mg(2+). Residues 337 to 345 (PQGRLDSFF) are interaction with PCNA. Residues 340-380 (RLDSFFKPVPSSPKKPVDTKSKGSAKRKRDSNKGGESKKKR) are disordered. The segment covering 342 to 353 (DSFFKPVPSSPK) has biased composition (low complexity). Residues Ser350 and Ser351 each carry the phosphoserine modification. Residues 370 to 380 (SNKGGESKKKR) show a composition bias toward basic and acidic residues.

Belongs to the XPG/RAD2 endonuclease family. FEN1 subfamily. Interacts with PCNA. Three molecules of rad2 bind to one PCNA trimer with each molecule binding to one PCNA monomer. PCNA stimulates the nuclease activity without altering cleavage specificity. It depends on Mg(2+) as a cofactor. Phosphorylated. Phosphorylation upon DNA damage induces relocalization to the nuclear plasma.

It is found in the nucleus. The protein localises to the nucleolus. The protein resides in the nucleoplasm. Its subcellular location is the mitochondrion. Its function is as follows. Structure-specific nuclease with 5'-flap endonuclease and 5'-3' exonuclease activities involved in DNA replication and repair. During DNA replication, cleaves the 5'-overhanging flap structure that is generated by displacement synthesis when DNA polymerase encounters the 5'-end of a downstream Okazaki fragment. It enters the flap from the 5'-end and then tracks to cleave the flap base, leaving a nick for ligation. Also involved in the long patch base excision repair (LP-BER) pathway, by cleaving within the apurinic/apyrimidinic (AP) site-terminated flap. Acts as a genome stabilization factor that prevents flaps from equilibrating into structures that lead to duplications and deletions. Also possesses 5'-3' exonuclease activity on nicked or gapped double-stranded DNA, and exhibits RNase H activity. Also involved in replication and repair of rDNA and in repairing mitochondrial DNA. The chain is Flap endonuclease 1 from Schizosaccharomyces pombe (strain 972 / ATCC 24843) (Fission yeast).